The chain runs to 329 residues: N-acetyl-gamma-glutamyl-phosphate reductase (329 aa).

The active site involves C155.

Belongs to the NAGSA dehydrogenase family. Type 1 subfamily.

Its subcellular location is the cytoplasm. It catalyses the reaction N-acetyl-L-glutamate 5-semialdehyde + phosphate + NADP(+) = N-acetyl-L-glutamyl 5-phosphate + NADPH + H(+). Its pathway is amino-acid biosynthesis; L-arginine biosynthesis; N(2)-acetyl-L-ornithine from L-glutamate: step 3/4. Its function is as follows. Catalyzes the NADPH-dependent reduction of N-acetyl-5-glutamyl phosphate to yield N-acetyl-L-glutamate 5-semialdehyde. In Shewanella pealeana (strain ATCC 700345 / ANG-SQ1), this protein is N-acetyl-gamma-glutamyl-phosphate reductase.